The following is a 658-amino-acid chain: UvrABC system protein B (658 aa).

In terms of domain architecture, Helicase ATP-binding spans 25–178 (KSLKNNNHYQ…KNFLLKLVEM (154 aa)). 38-45 (GVTGSGKT) provides a ligand contact to ATP. Residues 91-114 (HFDYYQPESYIPRRDLFIEKDSSI) carry the Beta-hairpin motif. The Helicase C-terminal domain maps to 433 to 607 (QVQDLFDEIK…ELKLRDDEIR (175 aa)). In terms of domain architecture, UVR spans 623-658 (EKIIKELDKKMRECAKNLDFEEAMRLRDEIAKLRTL).

The protein belongs to the UvrB family. In terms of assembly, forms a heterotetramer with UvrA during the search for lesions. Interacts with UvrC in an incision complex.

The protein resides in the cytoplasm. In terms of biological role, the UvrABC repair system catalyzes the recognition and processing of DNA lesions. A damage recognition complex composed of 2 UvrA and 2 UvrB subunits scans DNA for abnormalities. Upon binding of the UvrA(2)B(2) complex to a putative damaged site, the DNA wraps around one UvrB monomer. DNA wrap is dependent on ATP binding by UvrB and probably causes local melting of the DNA helix, facilitating insertion of UvrB beta-hairpin between the DNA strands. Then UvrB probes one DNA strand for the presence of a lesion. If a lesion is found the UvrA subunits dissociate and the UvrB-DNA preincision complex is formed. This complex is subsequently bound by UvrC and the second UvrB is released. If no lesion is found, the DNA wraps around the other UvrB subunit that will check the other stand for damage. The chain is UvrABC system protein B from Helicobacter pylori (strain HPAG1).